The chain runs to 414 residues: Serine/threonine transporter SstT (414 aa).

Transmembrane regions (helical) follow at residues 16–36, 46–66, 84–104, 143–163, 180–200, 219–239, 300–320, and 332–352; these read GSLVKQILVGLVLGILLAWIS, LGTLFVGALKAVAPVLVLMLV, ILFLYLLGTFSAALAAVVFSF, ALLNANYIGILVWAVSLGFAL, AVTFMVKLVIRFAPIGIFGLV, LVVLIGCMLLVALVVNPLLVF, MAGAAITITVLTLAAVHTLGV, and VVASLCACGASGVAGGSLLLI.

This sequence belongs to the dicarboxylate/amino acid:cation symporter (DAACS) (TC 2.A.23) family.

It localises to the cell inner membrane. The enzyme catalyses L-serine(in) + Na(+)(in) = L-serine(out) + Na(+)(out). The catalysed reaction is L-threonine(in) + Na(+)(in) = L-threonine(out) + Na(+)(out). Its function is as follows. Involved in the import of serine and threonine into the cell, with the concomitant import of sodium (symport system). The chain is Serine/threonine transporter SstT from Salmonella schwarzengrund (strain CVM19633).